An 80-amino-acid chain; its full sequence is Exodeoxyribonuclease 7 small subunit (80 aa).

Belongs to the XseB family. As to quaternary structure, heterooligomer composed of large and small subunits.

It localises to the cytoplasm. It catalyses the reaction Exonucleolytic cleavage in either 5'- to 3'- or 3'- to 5'-direction to yield nucleoside 5'-phosphates.. In terms of biological role, bidirectionally degrades single-stranded DNA into large acid-insoluble oligonucleotides, which are then degraded further into small acid-soluble oligonucleotides. This Pseudomonas fluorescens (strain SBW25) protein is Exodeoxyribonuclease 7 small subunit.